The following is a 423-amino-acid chain: Haloacid dehalogenase-like hydrolase domain-containing 5 (423 aa).

A signal peptide spans 1 to 23 (MAAWGCVAALGAARGLCWRAARA).

The protein belongs to the HAD-like hydrolase superfamily. As to expression, widely expressed.

The polypeptide is Haloacid dehalogenase-like hydrolase domain-containing 5 (Homo sapiens (Human)).